The primary structure comprises 201 residues: Recombination protein RecR (201 aa).

Residues 60–75 (CSRCGNVDTVDPCIVC) form a C4-type zinc finger. The Toprim domain maps to 83-178 (SVIIVVEDVS…KITRLAHGVP (96 aa)).

This sequence belongs to the RecR family.

Its function is as follows. May play a role in DNA repair. It seems to be involved in an RecBC-independent recombinational process of DNA repair. It may act with RecF and RecO. The chain is Recombination protein RecR from Rhizobium johnstonii (strain DSM 114642 / LMG 32736 / 3841) (Rhizobium leguminosarum bv. viciae).